The primary structure comprises 427 residues: Serine hydroxymethyltransferase (427 aa).

122–124 (GHI) is a binding site for (6S)-5,6,7,8-tetrahydrofolate. Residue K228 is modified to N6-(pyridoxal phosphate)lysine.

Belongs to the SHMT family. In terms of assembly, homodimer. Requires pyridoxal 5'-phosphate as cofactor.

It localises to the cytoplasm. The protein operates within amino-acid biosynthesis; glycine biosynthesis; glycine from L-serine: step 1/1. Catalyzes the reversible interconversion of serine and glycine with a modified folate serving as the one-carbon carrier. Also exhibits a pteridine-independent aldolase activity toward beta-hydroxyamino acids, producing glycine and aldehydes, via a retro-aldol mechanism. The chain is Serine hydroxymethyltransferase from Thermococcus onnurineus (strain NA1).